The following is a 358-amino-acid chain: U5 small nuclear ribonucleoprotein 40 kDa protein (358 aa).

A Glycyl lysine isopeptide (Lys-Gly) (interchain with G-Cter in SUMO2) cross-link involves residue lysine 18. Arginine 21 carries the asymmetric dimethylarginine modification. 7 WD repeats span residues glycine 65–alanine 104, glycine 108–arginine 147, glycine 150–threonine 190, glutamine 192–threonine 231, glycine 234–arginine 273, asparagine 284–lysine 323, and glycine 326–glutamine 358. A Glycyl lysine isopeptide (Lys-Gly) (interchain with G-Cter in SUMO2) cross-link involves residue lysine 271.

In terms of assembly, component of the pre-catalytic and catalytic spliceosome complexes. Component of the postcatalytic spliceosome P complex. Part of the U5 snRNP complex. Interacts with PRPF8. Component of the U4/U6-U5 tri-snRNP complex composed of the U4, U6 and U5 snRNAs and at least PRPF3, PRPF4, PRPF6, PRPF8, PRPF31, SNRNP200, TXNL4A, WDR57, SNRNP40, DDX23, CD2BP2, PPIH, SNU13, EFTUD2, SART1 and USP39. Component of the minor spliceosome, which splices U12-type introns.

The protein localises to the nucleus. Functionally, required for pre-mRNA splicing as component of the activated spliceosome. Component of the U5 small nuclear ribonucleoprotein (snRNP) complex and the U4/U6-U5 tri-snRNP complex, building blocks of the spliceosome. As a component of the minor spliceosome, involved in the splicing of U12-type introns in pre-mRNAs. This is U5 small nuclear ribonucleoprotein 40 kDa protein (Snrnp40) from Mus musculus (Mouse).